The chain runs to 125 residues: Fluoride-specific ion channel FluC (125 aa).

Helical transmembrane passes span 4–24 (LMLVCLGGAIGAGMRHLTVTA), 32–52 (AFPWGTLAVNVAGSFAMGLLV), 67–87 (LLLAPGMLGGFTTFSAFSLDV), and 100–120 (LAYVLASVAGSILALFVGLWL). 2 residues coordinate Na(+): G75 and T78.

It belongs to the fluoride channel Fluc/FEX (TC 1.A.43) family.

The protein localises to the cell inner membrane. It catalyses the reaction fluoride(in) = fluoride(out). Its activity is regulated as follows. Na(+) is not transported, but it plays an essential structural role and its presence is essential for fluoride channel function. In terms of biological role, fluoride-specific ion channel. Important for reducing fluoride concentration in the cell, thus reducing its toxicity. This Chelativorans sp. (strain BNC1) protein is Fluoride-specific ion channel FluC.